A 235-amino-acid chain; its full sequence is MKDELFKQSPKKQFEFDKSVASVFDDMINRSVPFYRENLELCGNLLAKILPTNASVCDLGCSSANFLIFLANLRKDFKLFGVDNSASMLEVAKSKAKAYGLDISFFEANLCEFDFFTCDVFVANYTMQFIRPPKRQELLDQIYKNLNSKGILIMSEKILYEDAFLSKNIIELYADYKEKQGYSKFEIAAKREALENVLIPYSQKENLNMLEKAGFKKIESIFKWANFETFIAFKD.

S-adenosyl-L-methionine contacts are provided by residues Y35, 60–62, 83–84, N124, and R191; these read GCS and DN.

It belongs to the class I-like SAM-binding methyltransferase superfamily. Cx-SAM synthase family. As to quaternary structure, homodimer.

It catalyses the reaction prephenate + S-adenosyl-L-methionine = carboxy-S-adenosyl-L-methionine + 3-phenylpyruvate + H2O. Functionally, catalyzes the conversion of S-adenosyl-L-methionine (SAM) to carboxy-S-adenosyl-L-methionine (Cx-SAM). This Campylobacter jejuni subsp. jejuni serotype O:2 (strain ATCC 700819 / NCTC 11168) protein is Carboxy-S-adenosyl-L-methionine synthase.